Here is a 256-residue protein sequence, read N- to C-terminus: MRLYRDEAVVVRQHKLGEADRIVTLLTRQHGLVRAVAKGVRRTRSRFGARLEPFSYIDVQLHPGRNLDTVTQVHTVESFAADIIDDYGRYTTACAILETAERLAGEERAPAPKLHALTASALRAIAAKQRPHELVLDAYLLRAMRFAGWAPALDECAKCATPGPHRAFHVAAGGAVCVHCRPPGAATPAPGVLDHLVALARGEWAGIEAVPESTRKQASGLVAAHLQWHLERQLRTLPLIERSGPARDAATAGHAG.

It belongs to the RecO family.

Involved in DNA repair and RecF pathway recombination. This is DNA repair protein RecO from Nocardia farcinica (strain IFM 10152).